Here is a 304-residue protein sequence, read N- to C-terminus: Killer cell immunoglobulin-like receptor 2DS2 (304 aa).

Residues 1–21 form the signal peptide; it reads MSLMVVSMACVGFFLLQGAWP. The Extracellular portion of the chain corresponds to 22–245; that stretch reads HEGVHRKPSL…SKTGNPRHLH (224 aa). Ig-like C2-type domains follow at residues 42-107 and 142-205; these read EETV…VTHS and GESV…FRDS. 2 disulfides stabilise this stretch: Cys49/Cys100 and Cys149/Cys198. 3 N-linked (GlcNAc...) asparagine glycosylation sites follow: Asn84, Asn178, and Asn211. Residues 220-239 are disordered; that stretch reads VTGNPSNSWPSPTEPSSKTG. A helical membrane pass occupies residues 246–265; sequence VLIGTSVVKIPFTILLFFLL. At 266-304 the chain is on the cytoplasmic side; the sequence is HRWCSNKKNAAVMDQEPAGNRTVNSEDSDEQDHQEVSYA. The disordered stretch occupies residues 280–304; that stretch reads QEPAGNRTVNSEDSDEQDHQEVSYA.

Belongs to the immunoglobulin superfamily.

The protein localises to the cell membrane. Functionally, receptor on natural killer (NK) cells for HLA-C alleles. Does not inhibit the activity of NK cells. In Homo sapiens (Human), this protein is Killer cell immunoglobulin-like receptor 2DS2.